The sequence spans 452 residues: Retinoid-inducible serine carboxypeptidase (452 aa).

The N-terminal stretch at 1–26 (MELALRRSPVPRWLLLLPLLLGLNAG) is a signal peptide. N64 and N126 each carry an N-linked (GlcNAc...) asparagine glycan. Residue S167 is part of the active site. N-linked (GlcNAc...) asparagine glycosylation occurs at N362. Residues D371 and H431 contribute to the active site.

The protein belongs to the peptidase S10 family.

The protein resides in the secreted. Its function is as follows. May be involved in vascular wall and kidney homeostasis. The chain is Retinoid-inducible serine carboxypeptidase (SCPEP1) from Homo sapiens (Human).